The chain runs to 437 residues: Repulsive guidance molecule B (437 aa).

Residues 1–45 form the signal peptide; it reads MGLRAAPSSAAAAAAEVEQRRSPGLCPPPLELLLLLLFSLGLLHA. N-linked (GlcNAc...) asparagine glycosylation is present at Asn120. Residues 121-133 are compositionally biased toward polar residues; it reads CSKDGPTSSTNPE. The segment at 121–153 is disordered; sequence CSKDGPTSSTNPEVTHDPCNYHSHAGAREHRRG. Intrachain disulfides connect Cys139–Cys226 and Cys163–Cys312. Asn383 is a glycosylation site (N-linked (GlcNAc...) asparagine). The GPI-anchor amidated asparagine moiety is linked to residue Asn413. The propeptide at 414 to 437 is removed in mature form; the sequence is GTPRGGSDLSVSLGLTCLILIVFL.

The protein belongs to the repulsive guidance molecule (RGM) family. In terms of assembly, homooligomer. Interacts with DRGX. Interacts with BMP2 and BMP4. Interacts with the BMP type I receptors ACVR1, BMPR1A and BMPR1B and with the BMP type II receptor ACVR2B. The functional complex with its receptor NEO1/neogenin appears to be a heterotetramer with a 2:2 stoichiometry, RGM molecules acting as staples that bring two NEO1 receptors together without interacting themselves, this arrangement leads to activation of downstream signaling via RhoA. In terms of processing, GPI-anchored. Autocatalytically cleaved at low pH; the two chains remain linked via two disulfide bonds.

It localises to the cell membrane. Its subcellular location is the membrane raft. Its function is as follows. Member of the repulsive guidance molecule (RGM) family that contributes to the patterning of the developing nervous system. Acts as a bone morphogenetic protein (BMP) coreceptor that potentiates BMP signaling. Promotes neuronal adhesion. May inhibit neurite outgrowth. The protein is Repulsive guidance molecule B of Homo sapiens (Human).